The sequence spans 219 residues: 7-cyano-7-deazaguanine synthase (219 aa).

10–20 (FSGGQDSTTCL) provides a ligand contact to ATP. Residues Cys187, Cys196, Cys199, and Cys202 each contribute to the Zn(2+) site.

It belongs to the QueC family. In terms of assembly, homodimer. It depends on Zn(2+) as a cofactor.

It catalyses the reaction 7-carboxy-7-deazaguanine + NH4(+) + ATP = 7-cyano-7-deazaguanine + ADP + phosphate + H2O + H(+). It participates in purine metabolism; 7-cyano-7-deazaguanine biosynthesis. In terms of biological role, catalyzes the ATP-dependent conversion of 7-carboxy-7-deazaguanine (CDG) to 7-cyano-7-deazaguanine (preQ(0)). This Lysinibacillus sphaericus (strain C3-41) protein is 7-cyano-7-deazaguanine synthase.